We begin with the raw amino-acid sequence, 517 residues long: GMP synthase [glutamine-hydrolyzing] (517 aa).

Residues 11-202 (KIIVLDFGSQ…AFDVCGAKDN (192 aa)) enclose the Glutamine amidotransferase type-1 domain. Catalysis depends on Cys88, which acts as the Nucleophile. Residues His176 and Glu178 contribute to the active site. Positions 203-392 (WTMDDFIKLS…LGLPHDLVWR (190 aa)) constitute a GMPS ATP-PPase domain. An ATP-binding site is contributed by 230 to 236 (SGGVDSS).

As to quaternary structure, homodimer.

The catalysed reaction is XMP + L-glutamine + ATP + H2O = GMP + L-glutamate + AMP + diphosphate + 2 H(+). It participates in purine metabolism; GMP biosynthesis; GMP from XMP (L-Gln route): step 1/1. Its function is as follows. Catalyzes the synthesis of GMP from XMP. This chain is GMP synthase [glutamine-hydrolyzing], found in Lactobacillus delbrueckii subsp. bulgaricus (strain ATCC 11842 / DSM 20081 / BCRC 10696 / JCM 1002 / NBRC 13953 / NCIMB 11778 / NCTC 12712 / WDCM 00102 / Lb 14).